The sequence spans 977 residues: Myb-like protein I (977 aa).

Positions 1 to 122 (MMNNQSMVRY…QQQQQQLDKS (122 aa)) are disordered. Residues 21–39 (PSPPVYSPIYRSPPPPPQP) show a composition bias toward pro residues. Residues 52 to 68 (DNSHHQVMDNSDHEQQQ) show a composition bias toward basic and acidic residues. Residues 75–118 (QQQQQQQHHHQQQQQQQHHQQQQQQHHQQQQQHHHQQQQQQQQQ) are compositionally biased toward low complexity. The region spanning 167–222 (EKKKQSRYWTPEEHSRFIEALSKYGHKDVKSISQYVSTRNPTQVRTHAQKYFLRID) is the HTH myb-type domain. The H-T-H motif DNA-binding region spans 195 to 218 (VKSISQYVSTRNPTQVRTHAQKYF). Disordered regions lie at residues 229-331 (LESK…SSPL), 422-516 (INNN…SSQP), 531-650 (NNNN…QQQM), 738-853 (LNSN…WPGP), and 872-960 (NYVP…GMNQ). Residues 241–252 (KDDDWLREEYND) are compositionally biased toward acidic residues. Positions 254–275 (GSPTQYSSCSNSPTTNSVANPF) are enriched in polar residues. Composition is skewed to low complexity over residues 276-329 (SNSL…GNSS) and 422-504 (INNN…INNN). Over residues 505–516 (GPNSPNLLSSQP) the composition is skewed to polar residues. Low complexity predominate over residues 738-754 (LNSNSGNSSPNISSING). Positions 783–797 (LSGSPSHSPAQSPHY) are enriched in polar residues. Low complexity-rich tracts occupy residues 798–848 (NLNN…SHSI) and 887–943 (SPHF…GSGS). Polar residues predominate over residues 944–960 (WHQYQATDSPTGWGMNQ).

The protein resides in the nucleus. The sequence is that of Myb-like protein I (mybI) from Dictyostelium discoideum (Social amoeba).